A 772-amino-acid chain; its full sequence is Probable serine/threonine-protein kinase HAL5-like (772 aa).

Disordered regions lie at residues methionine 1–valine 102, arginine 115–asparagine 165, isoleucine 185–threonine 241, and asparagine 344–valine 396. The segment covering serine 9–leucine 19 has biased composition (basic and acidic residues). 2 stretches are compositionally biased toward low complexity: residues lysine 20–phenylalanine 33 and asparagine 41–proline 59. The span at threonine 66–threonine 86 shows a compositional bias: basic and acidic residues. The segment covering arginine 146–asparagine 158 has biased composition (low complexity). Residues arginine 202–leucine 212 show a composition bias toward basic residues. A Protein kinase domain is found at glycine 454–methionine 758. Residues isoleucine 460–valine 468 and lysine 498 each bind ATP. Aspartate 609 serves as the catalytic Proton acceptor.

The protein belongs to the protein kinase superfamily. CAMK Ser/Thr protein kinase family. NPR/HAL subfamily. HAL5 sub-subfamily.

The catalysed reaction is L-seryl-[protein] + ATP = O-phospho-L-seryl-[protein] + ADP + H(+). The enzyme catalyses L-threonyl-[protein] + ATP = O-phospho-L-threonyl-[protein] + ADP + H(+). This is Probable serine/threonine-protein kinase HAL5-like from Kluyveromyces lactis (strain ATCC 8585 / CBS 2359 / DSM 70799 / NBRC 1267 / NRRL Y-1140 / WM37) (Yeast).